A 148-amino-acid polypeptide reads, in one-letter code: MKVELKVKPIENGTVIDHIESSKALKVYDLLKINESMPVTLALNVSSKKGSLKDILKIEGLALSKADVNKIALVSPNATINIIKDGKVVSKFKVGIPNKIDGIVKCTNPNCITNKEGIKSKFTVEQKDTLKIRCDYCEKFINSIIISR.

Positions 106, 111, 134, and 137 each coordinate Zn(2+).

The protein belongs to the PyrI family. Contains catalytic and regulatory chains. The cofactor is Zn(2+).

Involved in allosteric regulation of aspartate carbamoyltransferase. This Methanococcus vannielii (strain ATCC 35089 / DSM 1224 / JCM 13029 / OCM 148 / SB) protein is Aspartate carbamoyltransferase regulatory chain.